A 150-amino-acid polypeptide reads, in one-letter code: Probable antibacterial peptide (150 aa).

The N-terminal stretch at 1–19 (MHIARFCLLSSMAVLALSA) is a signal peptide.

It localises to the secreted. Has antibacterial activity in vitro. The sequence is that of Probable antibacterial peptide from Riptortus clavatus (Bean bug).